The chain runs to 120 residues: Ribosome-binding factor A (120 aa).

The protein belongs to the RbfA family. Monomer. Binds 30S ribosomal subunits, but not 50S ribosomal subunits or 70S ribosomes.

The protein resides in the cytoplasm. Its function is as follows. One of several proteins that assist in the late maturation steps of the functional core of the 30S ribosomal subunit. Associates with free 30S ribosomal subunits (but not with 30S subunits that are part of 70S ribosomes or polysomes). Required for efficient processing of 16S rRNA. May interact with the 5'-terminal helix region of 16S rRNA. In Limosilactobacillus fermentum (strain NBRC 3956 / LMG 18251) (Lactobacillus fermentum), this protein is Ribosome-binding factor A.